Here is a 362-residue protein sequence, read N- to C-terminus: UDP-N-acetylglucosamine--N-acetylmuramyl-(pentapeptide) pyrophosphoryl-undecaprenol N-acetylglucosamine transferase (362 aa).

Residues 14–16, R170, S199, and Q289 each bind UDP-N-acetyl-alpha-D-glucosamine; that span reads TGG.

Belongs to the glycosyltransferase 28 family. MurG subfamily.

Its subcellular location is the cell inner membrane. It catalyses the reaction di-trans,octa-cis-undecaprenyl diphospho-N-acetyl-alpha-D-muramoyl-L-alanyl-D-glutamyl-meso-2,6-diaminopimeloyl-D-alanyl-D-alanine + UDP-N-acetyl-alpha-D-glucosamine = di-trans,octa-cis-undecaprenyl diphospho-[N-acetyl-alpha-D-glucosaminyl-(1-&gt;4)]-N-acetyl-alpha-D-muramoyl-L-alanyl-D-glutamyl-meso-2,6-diaminopimeloyl-D-alanyl-D-alanine + UDP + H(+). Its pathway is cell wall biogenesis; peptidoglycan biosynthesis. Its function is as follows. Cell wall formation. Catalyzes the transfer of a GlcNAc subunit on undecaprenyl-pyrophosphoryl-MurNAc-pentapeptide (lipid intermediate I) to form undecaprenyl-pyrophosphoryl-MurNAc-(pentapeptide)GlcNAc (lipid intermediate II). The sequence is that of UDP-N-acetylglucosamine--N-acetylmuramyl-(pentapeptide) pyrophosphoryl-undecaprenol N-acetylglucosamine transferase from Borrelia turicatae (strain 91E135).